A 692-amino-acid chain; its full sequence is Methionine--tRNA ligase (692 aa).

The short motif at 12–22 is the 'HIGH' region element; sequence PYANGPLHLGH. Cys143, Cys146, Cys156, and Cys159 together coordinate Zn(2+). A 'KMSKS' region motif is present at residues 330-334; it reads KMSKS. Residue Lys333 participates in ATP binding. Residues 554–563 are compositionally biased toward low complexity; it reads AAAAPAAKPA. The disordered stretch occupies residues 554–575; that stretch reads AAAAPAAKPAAPAPAPAPAKDE. Residues 589 to 692 enclose the tRNA-binding domain; it reads DFAKLDLRIG…SGAQPGMPVR (104 aa).

This sequence belongs to the class-I aminoacyl-tRNA synthetase family. MetG type 1 subfamily. As to quaternary structure, homodimer. Zn(2+) is required as a cofactor.

It localises to the cytoplasm. It carries out the reaction tRNA(Met) + L-methionine + ATP = L-methionyl-tRNA(Met) + AMP + diphosphate. Functionally, is required not only for elongation of protein synthesis but also for the initiation of all mRNA translation through initiator tRNA(fMet) aminoacylation. The chain is Methionine--tRNA ligase from Stenotrophomonas maltophilia (strain K279a).